A 257-amino-acid polypeptide reads, in one-letter code: Pyridoxine 5'-phosphate synthase (257 aa).

Asn6 contributes to the 3-amino-2-oxopropyl phosphate binding site. 8–9 (DH) serves as a coordination point for 1-deoxy-D-xylulose 5-phosphate. Position 17 (Arg17) interacts with 3-amino-2-oxopropyl phosphate. Residue His41 is the Proton acceptor of the active site. The 1-deoxy-D-xylulose 5-phosphate site is built by Arg43 and His48. Catalysis depends on Glu68, which acts as the Proton acceptor. A 1-deoxy-D-xylulose 5-phosphate-binding site is contributed by Thr98. Residue His210 is the Proton donor of the active site. Residues Gly211 and 232–233 (GQ) each bind 3-amino-2-oxopropyl phosphate.

This sequence belongs to the PNP synthase family. As to quaternary structure, homooctamer; tetramer of dimers.

It localises to the cytoplasm. It carries out the reaction 3-amino-2-oxopropyl phosphate + 1-deoxy-D-xylulose 5-phosphate = pyridoxine 5'-phosphate + phosphate + 2 H2O + H(+). It participates in cofactor biosynthesis; pyridoxine 5'-phosphate biosynthesis; pyridoxine 5'-phosphate from D-erythrose 4-phosphate: step 5/5. Catalyzes the complicated ring closure reaction between the two acyclic compounds 1-deoxy-D-xylulose-5-phosphate (DXP) and 3-amino-2-oxopropyl phosphate (1-amino-acetone-3-phosphate or AAP) to form pyridoxine 5'-phosphate (PNP) and inorganic phosphate. The protein is Pyridoxine 5'-phosphate synthase of Campylobacter jejuni subsp. jejuni serotype O:2 (strain ATCC 700819 / NCTC 11168).